Consider the following 559-residue polypeptide: MAPRSQSKSQREPLRKRSREDADNSNDTNEDAAIQEVDADFEEVAGLLGTDIADPDQKQKQKQSKDEKRLQELTKPKVSNTSEAEADEPGVNYSFEKADFSEPTMKAIKEMGFQKMTKVQAKTIPPLLAGRDVLGAAKTGSGKTLAFLLPAVELLYSLKIKPRNGTAVIIITPTRELALQIFGVARQLMEYHSQTCGIVIGGADRRQEATKLAKGVNLLVATPGRLLDHLKNTQGFVFLNLKALVIDEADRILEIGFEEEMKQIIKILPNEDRQTMLFSATQTTKVEDLARISLRPGPLYINVVPEKDVSTADGLEQGYVVCDSDKRFLLLFSFLKRNIKKKIIVFLSSCNSVKFYSELLNYIDLPVLDLHGKQKQQKRTNTFFEFCNAKQGILVCTDVAARGLDIPAVDWIIQFDPPDDPRDYIHRVGRTARGTDGKGKSLMFLTPSELGFLRYLKAANVPLNEYEFPANKIANVQSQLTKLIKTNYLLHQSAKDGYRAYLQAYSSHSLKTVYQIDKLDLVKVGKSFGFDVPPKVNITIGASGKSIEKKHKKQKRDRK.

The tract at residues 1 to 90 (MAPRSQSKSQ…TSEAEADEPG (90 aa)) is disordered. Basic and acidic residues-rich tracts occupy residues 9-22 (SQRE…REDA) and 55-75 (PDQK…ELTK). A Q motif motif is present at residues 93 to 121 (YSFEKADFSEPTMKAIKEMGFQKMTKVQA). One can recognise a Helicase ATP-binding domain in the interval 124 to 300 (IPPLLAGRDV…RISLRPGPLY (177 aa)). 137–144 (AKTGSGKT) is an ATP binding site. A DEAD box motif is present at residues 247 to 250 (DEAD). Residues 314 to 484 (GLEQGYVVCD…NVQSQLTKLI (171 aa)) enclose the Helicase C-terminal domain.

It belongs to the DEAD box helicase family. DDX18/HAS1 subfamily. As to quaternary structure, associates in the nucleolus with the 60S and pre-60S ribosomal subunits.

It localises to the nucleus. The protein resides in the nucleolus. The catalysed reaction is ATP + H2O = ADP + phosphate + H(+). In terms of biological role, ATP-dependent RNA helicase involved in 40S ribosomal subunit biogenesis. Required for the processing and cleavage of 35S pre-rRNA at sites A0, A1, and A2, leading to mature 18S rRNA. The polypeptide is ATP-dependent RNA helicase HAS1 (HAS1) (Lodderomyces elongisporus (strain ATCC 11503 / CBS 2605 / JCM 1781 / NBRC 1676 / NRRL YB-4239) (Yeast)).